The primary structure comprises 156 residues: Peroxisomal membrane associated protein 20 (156 aa).

In terms of domain architecture, Thioredoxin spans valine 2 to leucine 156. The Cysteine sulfenic acid (-SOH) intermediate role is filled by cysteine 43.

The protein belongs to the peroxiredoxin family. Prx5 subfamily. In terms of assembly, homodimer; disulfide-linked, upon oxidation.

The protein localises to the cytoplasm. Its subcellular location is the nucleus. In terms of biological role, may act as a chaperone rather than a peroxidase. Has no thioredoxin-dependent peroxidase activity. Shows weak chaperone activity. This chain is Peroxisomal membrane associated protein 20, found in Schizosaccharomyces pombe (strain 972 / ATCC 24843) (Fission yeast).